The sequence spans 1013 residues: RNA-binding protein 44 (1013 aa).

Disordered stretches follow at residues 1–25 (MQAT…FQND) and 56–94 (LATE…IFSQ). The span at 56-76 (LATEERASDKENSIVDQRDLS) shows a compositional bias: basic and acidic residues. Over residues 78 to 94 (LSFSENQDSNRGNIFSQ) the composition is skewed to polar residues. Residues Ser365, Ser368, Ser510, Ser681, and Ser688 each carry the phosphoserine modification. One can recognise an RRM domain in the interval 792-865 (FLIHVGGLCP…KSVTVRLVKI (74 aa)). Residues 905-925 (RAKSRQLESEQDSEFPPLDQG) are disordered.

In terms of assembly, homodimer. Interacts with TEX14. As to expression, highly expressed in testis. Also expressed in other tissues at lower level.

Its subcellular location is the cytoplasm. Component of intercellular bridges during meiosis. Intercellular bridges are evolutionarily conserved structures that connect differentiating germ cells. Not required for fertility. This is RNA-binding protein 44 (Rbm44) from Mus musculus (Mouse).